A 180-amino-acid polypeptide reads, in one-letter code: Molybdopterin synthase catalytic subunit (180 aa).

Residues 1–10 (MSSTTPTTEP) are compositionally biased toward polar residues. The disordered stretch occupies residues 1–31 (MSSTTPTTEPDQLPPHLDPQTYPRTTTNPTL). Low complexity predominate over residues 21–31 (TYPRTTTNPTL). Substrate-binding positions include 131 to 132 (HR), lysine 147, and 154 to 156 (KKE).

Belongs to the MoaE family. MOCS2B subfamily. As to quaternary structure, heterotetramer; composed of 2 small (MOCS2A) and 2 large (MOCS2B) subunits.

It localises to the cytoplasm. The enzyme catalyses 2 [molybdopterin-synthase sulfur-carrier protein]-C-terminal-Gly-aminoethanethioate + cyclic pyranopterin phosphate + H2O = molybdopterin + 2 [molybdopterin-synthase sulfur-carrier protein]-C-terminal Gly-Gly + 2 H(+). It participates in cofactor biosynthesis; molybdopterin biosynthesis. Functionally, catalytic subunit of the molybdopterin synthase complex, a complex that catalyzes the conversion of precursor Z into molybdopterin. Acts by mediating the incorporation of 2 sulfur atoms from thiocarboxylated MOCS2A into precursor Z to generate a dithiolene group. This chain is Molybdopterin synthase catalytic subunit, found in Aspergillus niger (strain ATCC MYA-4892 / CBS 513.88 / FGSC A1513).